The chain runs to 401 residues: 3-sulfinopropanoyl-CoA desulfinase (401 aa).

FAD contacts are provided by residues 121–124 (ICIS), Ser-130, and 153–156 (YWIT). Residue 243–244 (YN) participates in substrate binding. FAD-binding positions include Arg-272, Gln-339, Ser-343, 366-370 (GGTAQ), and Gln-387.

This sequence belongs to the acyl-CoA dehydrogenase family. As to quaternary structure, homotetramer. The cofactor is FAD.

The catalysed reaction is 3-sulfinopropanoyl-CoA + H2O = propanoyl-CoA + sulfite + H(+). Its function is as follows. Catalyzes the conversion 3-sulfinopropanoyl-CoA (3SP-CoA) to propanoyl-CoA by abstraction of sulfite. Does not show dehydrogenase activity. Involved in the degradation of 3,3'-dithiodipropionate (DTDP), a sulfur-containing precursor substrate for biosynthesis of polythioesters (PTEs). In Advenella mimigardefordensis (strain DSM 17166 / LMG 22922 / DPN7), this protein is 3-sulfinopropanoyl-CoA desulfinase.